We begin with the raw amino-acid sequence, 320 residues long: L-lactate dehydrogenase 2 (320 aa).

The NAD(+) site is built by Val-16, Asp-37, Lys-42, and Tyr-69. Arg-94 is a substrate binding site. Residues Ser-107, 124–126, and Thr-149 each bind NAD(+); that span reads VTN. Residue 126 to 129 participates in substrate binding; it reads NPVD. 154-157 is a substrate binding site; that stretch reads DTAR. Residues Arg-159 and His-174 each coordinate beta-D-fructose 1,6-bisphosphate. His-181 functions as the Proton acceptor in the catalytic mechanism. Thr-235 is a binding site for substrate.

It belongs to the LDH/MDH superfamily. LDH family. In terms of assembly, homotetramer.

It localises to the cytoplasm. The enzyme catalyses (S)-lactate + NAD(+) = pyruvate + NADH + H(+). It functions in the pathway fermentation; pyruvate fermentation to lactate; (S)-lactate from pyruvate: step 1/1. Allosterically activated by fructose 1,6-bisphosphate (FBP). Catalyzes the conversion of lactate to pyruvate. This Clostridium acetobutylicum (strain ATCC 824 / DSM 792 / JCM 1419 / IAM 19013 / LMG 5710 / NBRC 13948 / NRRL B-527 / VKM B-1787 / 2291 / W) protein is L-lactate dehydrogenase 2.